A 286-amino-acid chain; its full sequence is NADPH-dependent 7-cyano-7-deazaguanine reductase (286 aa).

92–94 (IES) contacts substrate. 94 to 95 (SK) lines the NADPH pocket. The active-site Thioimide intermediate is Cys-194. Asp-201 functions as the Proton donor in the catalytic mechanism. 233 to 234 (HE) provides a ligand contact to substrate. An NADPH-binding site is contributed by 262–263 (RG).

Belongs to the GTP cyclohydrolase I family. QueF type 2 subfamily. Homodimer.

The protein resides in the cytoplasm. The enzyme catalyses 7-aminomethyl-7-carbaguanine + 2 NADP(+) = 7-cyano-7-deazaguanine + 2 NADPH + 3 H(+). Its pathway is tRNA modification; tRNA-queuosine biosynthesis. In terms of biological role, catalyzes the NADPH-dependent reduction of 7-cyano-7-deazaguanine (preQ0) to 7-aminomethyl-7-deazaguanine (preQ1). This Shewanella sp. (strain MR-4) protein is NADPH-dependent 7-cyano-7-deazaguanine reductase.